A 404-amino-acid polypeptide reads, in one-letter code: Tryptophan synthase beta chain (404 aa).

Position 94 is an N6-(pyridoxal phosphate)lysine (lysine 94).

Belongs to the TrpB family. Tetramer of two alpha and two beta chains. Requires pyridoxal 5'-phosphate as cofactor.

The catalysed reaction is (1S,2R)-1-C-(indol-3-yl)glycerol 3-phosphate + L-serine = D-glyceraldehyde 3-phosphate + L-tryptophan + H2O. It functions in the pathway amino-acid biosynthesis; L-tryptophan biosynthesis; L-tryptophan from chorismate: step 5/5. Functionally, the beta subunit is responsible for the synthesis of L-tryptophan from indole and L-serine. This chain is Tryptophan synthase beta chain, found in Staphylococcus aureus (strain USA300).